Consider the following 570-residue polypeptide: Rqc2 homolog RqcH (570 aa).

The tract at residues 1 to 173 (MSFDGMFTYG…LPPAQDKISP (173 aa)) is NFACT-N domain. Residues 179–281 (DDILRHLSFQ…ELLDRFYFGK (103 aa)) form a hhH domain region. Coiled coils occupy residues 279 to 336 (FGKA…TANL) and 368 to 430 (TPSE…VEGK). The segment at 282–434 (AERDRVKQQA…ELVEGKYLRP (153 aa)) is coiled-coil-M (CCM). An NFACT-R region spans residues 446–570 (HNPVLETYES…ADTVIKLKKS (125 aa)).

Belongs to the NEMF family. Associates with isolated or stalled 50S ribosomal subunits. Binds to RqcP. Interacts with ribosomal protein uL11. Displaced from the 50S subunit by thiostrepton. In crystallized 50S subunits RqcH is variously associated with A/P-site tRNA, P-site tRNA and RqcP, an E-site tRNA or A- and P-site tRNAs and RqcP2(YlmH).

Key component of the ribosome quality control system (RQC), a ribosome-associated complex that mediates the extraction of incompletely synthesized nascent chains from stalled ribosomes and their subsequent degradation. RqcH recruits Ala-charged tRNA, and with RqcP directs the elongation of stalled nascent chains on 50S ribosomal subunits, leading to non-templated C-terminal alanine extensions (Ala tail). The Ala tail promotes nascent chain degradation. RqcH, RqcP and charged tRNA(Ala) are necessary and sufficient to add an Ala tail to a model stalled nascent peptide; does not add Val. Binds the P-site tRNA in 50S ribosomal subunit, unwinds the anticodon stem and interacts with the splayed anticodon. Selectively binds tRNA(Ala) isoacceptors, even in the absence of the 50S ribosomal subunit. Adds between 1 and at least 8 Ala residues to the nascent chain; detection of the Ala tail requires either deletion of clpP or its inhibition. Binds to 50S ribosomal subunits, at least 30% of which contain a P-site tRNA and thus are obstructed. The sequence is that of Rqc2 homolog RqcH from Bacillus subtilis (strain 168).